The sequence spans 169 residues: MFTSAHANRSPLTSASVRRPSHSVVEHSATGLISEIVYREDQPMMTQLLLLPLLQQLGQQSRWQLWLTPQQKLSKEWVQSSGLPLSKVMQINQMSPCNTLESMIRALRTGNYNVVIGWLTDELTEQEHERLALAAEEGHPMGFIMRPVRNTSQPGRQLSGLKIHSNLYH.

Positions 1–16 (MFTSAHANRSPLTSAS) are enriched in polar residues. A disordered region spans residues 1-20 (MFTSAHANRSPLTSASVRRP). Positions 106 to 112 (ALRTGNY) are ftsZ binding. A lon protease binding region spans residues 162–169 (KIHSNLYH).

Belongs to the SulA family. In terms of assembly, interacts with FtsZ. In terms of processing, is rapidly cleaved and degraded by the Lon protease once DNA damage is repaired.

Functionally, component of the SOS system and an inhibitor of cell division. Accumulation of SulA causes rapid cessation of cell division and the appearance of long, non-septate filaments. In the presence of GTP, binds a polymerization-competent form of FtsZ in a 1:1 ratio, thus inhibiting FtsZ polymerization and therefore preventing it from participating in the assembly of the Z ring. This mechanism prevents the premature segregation of damaged DNA to daughter cells during cell division. The sequence is that of Cell division inhibitor SulA from Klebsiella aerogenes (Enterobacter aerogenes).